The sequence spans 462 residues: A-type ATP synthase subunit B (462 aa).

The protein belongs to the ATPase alpha/beta chains family. In terms of assembly, has multiple subunits with at least A(3), B(3), C, D, E, F, H, I and proteolipid K(x).

Its subcellular location is the cell membrane. In terms of biological role, component of the A-type ATP synthase that produces ATP from ADP in the presence of a proton gradient across the membrane. The B chain is a regulatory subunit. This Methanococcus maripaludis (strain C6 / ATCC BAA-1332) protein is A-type ATP synthase subunit B.